Consider the following 448-residue polypeptide: Vacuolar amino acid transporter 6 (448 aa).

Topologically, residues 1 to 7 (MVASIRS) are cytoplasmic. Residues 8–28 (GVLTLLHTACGAGILAMPYAF) traverse the membrane as a helical segment. The Vacuolar segment spans residues 29-32 (KPFG). Residues 33–53 (LIPGVIMIVLCGACAMQSLFI) traverse the membrane as a helical segment. Topologically, residues 54 to 80 (QARVAKYVPQGRASFSALTRLINPNLG) are cytoplasmic. Residues 81-101 (IVFDLAIAIKCFGVGVSYMIV) traverse the membrane as a helical segment. Residues 102–125 (VGDLMPQIMSVWTRNAWLLNRNVQ) lie on the Vacuolar side of the membrane. Residues 126 to 146 (ISLIMLFFVAPLSFLKKLNSL) form a helical membrane-spanning segment. Residues 147–150 (RYAS) are Cytoplasmic-facing. Residues 151–171 (MVAISSVAYLCVLVLLHYVAP) traverse the membrane as a helical segment. The Vacuolar segment spans residues 172–195 (SDEILRLKGRISYLLPPQSHDLNV). Residues 196 to 216 (LNTLPIFVFAYTCHHNMFSII) form a helical membrane-spanning segment. Residues 217–229 (NEQRSSRFEHVMK) are Cytoplasmic-facing. A helical membrane pass occupies residues 230-250 (IPLIAISLALILYIAIGCAGY). Topologically, residues 251-267 (LTFGDNIIGNIIMLYPQ) are vacuolar. A helical membrane pass occupies residues 268-288 (AVSSTIGRIAIVLLVMLAFPL). At 289–357 (QCHPARASIH…PKETPLRGKS (69 aa)) the chain is on the cytoplasmic side. A Phosphoserine modification is found at serine 344. The chain crosses the membrane as a helical span at residues 358 to 378 (FIVITCSILVASYLVAISVSS). Residues 379–381 (LAR) are Vacuolar-facing. A helical transmembrane segment spans residues 382-402 (VLAIVGATGSTSISFILPGLF). The Cytoplasmic segment spans residues 403–424 (GYKLIGTEHKTAVPLTTKIFKY). Residues 425–445 (TGLLLFIWGLIIMITCLTAAL) traverse the membrane as a helical segment. The Vacuolar segment spans residues 446–448 (KLN).

Belongs to the amino acid/polyamine transporter 2 family.

The protein resides in the vacuole membrane. Its function is as follows. Involved in amino acid efflux from the vacuole to the cytoplasm. Capable of transporting aspartate and glutamate. Requires ATP for function. This chain is Vacuolar amino acid transporter 6 (AVT6), found in Saccharomyces cerevisiae (strain ATCC 204508 / S288c) (Baker's yeast).